A 201-amino-acid chain; its full sequence is Small ribosomal subunit protein uS4c (201 aa).

The S4 RNA-binding domain occupies 89–157 (MRLDNILFRL…VQNYIASSDP (69 aa)).

It belongs to the universal ribosomal protein uS4 family. As to quaternary structure, part of the 30S ribosomal subunit. Contacts protein S5. The interaction surface between S4 and S5 is involved in control of translational fidelity.

Its subcellular location is the plastid. It is found in the chloroplast. One of the primary rRNA binding proteins, it binds directly to 16S rRNA where it nucleates assembly of the body of the 30S subunit. Functionally, with S5 and S12 plays an important role in translational accuracy. The sequence is that of Small ribosomal subunit protein uS4c (rps4) from Triticum aestivum (Wheat).